Reading from the N-terminus, the 172-residue chain is UBA-like domain-containing protein 2 (172 aa).

A compositionally biased stretch (pro residues) spans 118–130 (PPNQQPVWLPPSS). The interval 118-172 (PPNQQPVWLPPSSPTGHHTLHHHHHHMHPPPSWPPVSQPANGPQTPVISALHGQR) is disordered. Basic residues predominate over residues 135–145 (HTLHHHHHHMH).

It belongs to the UBALD family.

The protein is UBA-like domain-containing protein 2 (ubald2) of Danio rerio (Zebrafish).